A 425-amino-acid polypeptide reads, in one-letter code: Protein-glutamate methylesterase/protein-glutamine glutaminase (425 aa).

The region spanning 22-140 (RVMVVDDSVV…EVAAADIFRH (119 aa)) is the Response regulatory domain. Position 73 is a 4-aspartylphosphate (Asp-73). Disordered stretches follow at residues 150-174 (AAKRRRPATVASPPPDHDDYGSNAS) and 203-223 (VQREQQPRSAQAARAMSRPQP). One can recognise a CheB-type methylesterase domain in the interval 221–417 (PQPTLRSFSA…PLQQIAPKLV (197 aa)). Residues Ser-241, His-269, and Asp-365 contribute to the active site.

The protein belongs to the CheB family. Post-translationally, phosphorylated by CheA. Phosphorylation of the N-terminal regulatory domain activates the methylesterase activity.

It localises to the cytoplasm. The enzyme catalyses [protein]-L-glutamate 5-O-methyl ester + H2O = L-glutamyl-[protein] + methanol + H(+). The catalysed reaction is L-glutaminyl-[protein] + H2O = L-glutamyl-[protein] + NH4(+). Involved in chemotaxis. Part of a chemotaxis signal transduction system that modulates chemotaxis in response to various stimuli. Catalyzes the demethylation of specific methylglutamate residues introduced into the chemoreceptors (methyl-accepting chemotaxis proteins or MCP) by CheR. Also mediates the irreversible deamidation of specific glutamine residues to glutamic acid. In Nitrobacter winogradskyi (strain ATCC 25391 / DSM 10237 / CIP 104748 / NCIMB 11846 / Nb-255), this protein is Protein-glutamate methylesterase/protein-glutamine glutaminase.